Here is a 251-residue protein sequence, read N- to C-terminus: Flagellar basal-body rod protein FlgF (251 aa).

The protein belongs to the flagella basal body rod proteins family. The basal body constitutes a major portion of the flagellar organelle and consists of five rings (E,L,P,S, and M) mounted on a central rod. The rod consists of about 26 subunits of FlgG in the distal portion, and FlgB, FlgC and FlgF are thought to build up the proximal portion of the rod with about 6 subunits each.

It is found in the bacterial flagellum basal body. The chain is Flagellar basal-body rod protein FlgF (flgF) from Escherichia coli (strain K12).